Reading from the N-terminus, the 774-residue chain is Ent-beyerene synthase KSL4, chloroplastic (774 aa).

The N-terminal 35 residues, 1 to 35 (MLLGSTNTLRISSHGKEWEGKTLTGMPLGKVNQRV), are a transit peptide targeting the chloroplast. Mg(2+)-binding residues include Asp-525, Asp-529, Asn-668, Asp-669, Thr-672, and Glu-676. The DDXXD motif motif lies at 525-529 (DDFFD).

This sequence belongs to the terpene synthase family. Requires Mg(2+) as cofactor.

It is found in the plastid. It localises to the chloroplast. It catalyses the reaction ent-copalyl diphosphate = ent-beyerene + diphosphate. The catalysed reaction is ent-copalyl diphosphate = ent-atiserene + diphosphate. The enzyme catalyses ent-copalyl diphosphate = ent-kaur-16-ene + diphosphate. It functions in the pathway secondary metabolite biosynthesis; terpenoid biosynthesis. Functionally, diterpene cyclase involved in the biosynthesis of labdane-related diterpenoids (LRDs) natural products. Catalyzes the cyclization of ent-CDP into ent-beyerene as a major and ent-kaurene and ent-atiserene as minor products. In Ricinus communis (Castor bean), this protein is Ent-beyerene synthase KSL4, chloroplastic.